The following is a 322-amino-acid chain: D-alanine--D-alanine ligase (322 aa).

In terms of domain architecture, ATP-grasp spans 108 to 311; that stretch reads KEFYYNAELP…FPSLLDTLIE (204 aa). 136-192 contributes to the ATP binding site; the sequence is IEDLGLPLVVKPACAGSSIGISLAHTEEELLAGINHARDCSAGAIMVEQFIKGRELT. Mg(2+)-binding residues include Asp-265, Glu-278, and Asn-280.

This sequence belongs to the D-alanine--D-alanine ligase family. Mg(2+) is required as a cofactor. Mn(2+) serves as cofactor.

The protein localises to the cytoplasm. The enzyme catalyses 2 D-alanine + ATP = D-alanyl-D-alanine + ADP + phosphate + H(+). The protein operates within cell wall biogenesis; peptidoglycan biosynthesis. Cell wall formation. This chain is D-alanine--D-alanine ligase, found in Desulfotalea psychrophila (strain LSv54 / DSM 12343).